The sequence spans 429 residues: Homocysteine synthase (429 aa).

N6-(pyridoxal phosphate)lysine is present on Lys210.

Belongs to the trans-sulfuration enzymes family. Homotetramer. Pyridoxal 5'-phosphate is required as a cofactor.

The protein localises to the cytoplasm. It is found in the nucleus. It catalyses the reaction O-acetyl-L-homoserine + methanethiol = L-methionine + acetate + H(+). The enzyme catalyses O-acetyl-L-homoserine + hydrogen sulfide = L-homocysteine + acetate. Its pathway is amino-acid biosynthesis; L-methionine biosynthesis via de novo pathway; L-homocysteine from O-acetyl-L-homoserine. Functionally, catalyzes the conversion of O-acetyl-L-homoserine (OAH) into homocysteine in the methionine biosynthesis pathway. Can also use O-succinyl-L-homoserine and L-homoserine as substrates. Also has cysteine synthase (O-acetylserine sulfhydrylase) activity in vitro, but in S.pombe, it seems only to be involved in the alternative pathway of methionine biosynthesis under cysteine deficiency conditions. The polypeptide is Homocysteine synthase (Schizosaccharomyces pombe (strain 972 / ATCC 24843) (Fission yeast)).